We begin with the raw amino-acid sequence, 534 residues long: Nuclear polyadenylated RNA-binding protein 4 (534 aa).

Residues 1 to 154 are disordered; it reads MSSDEEDFND…TKEERSKADL (154 aa). A phosphoserine mark is found at serine 2 and serine 3. The segment covering 13–30 has biased composition (basic and acidic residues); it reads GDDKPTTTEEVKKEEEQN. Low complexity predominate over residues 37–78; sequence SQLDQLAALQALSSSLNKLNNPNSNNSSSNNSNQDTSSSKQD. Residues serine 51 and serine 87 each carry the phosphoserine modification. Residues 81–98 show a composition bias toward basic and acidic residues; that stretch reads ANDKEGSNEDTKNEKKQE. Composition is skewed to low complexity over residues 99 to 112 and 121 to 144; these read SATSANANANASSA and QLQQTMSQFQQPSSQSPPQQQVTQ. Basic and acidic residues predominate over residues 145-154; it reads TKEERSKADL. RRM domains are found at residues 159-241 and 243-320; these read CKMF…EQDK and GKIF…RAEP. Serine 206 is subject to Phosphoserine. Disordered stretches follow at residues 316–354 and 415–534; these read KRAEPRHMQQKSSNNGGNNGGNNMNRRGGNFGNQGDFNQ and MPPN…PYNR. Residues 336–354 show a composition bias toward low complexity; that stretch reads GNNMNRRGGNFGNQGDFNQ. Over residues 420–459 the composition is skewed to polar residues; that stretch reads MTLNQPQQDSNATQGSPAPSDSDNNKSNDVQTIGNTSNTD. Threonine 458 is modified (phosphothreonine). A phosphoserine mark is found at serine 460 and serine 462. Positions 460–475 are enriched in low complexity; sequence SGSPPLNLPNGPKGPS. A compositionally biased stretch (basic and acidic residues) spans 478 to 505; the sequence is NDDHNSGYGYNRDRGDRDRNDRDRDYNH. Arginine 519 carries the post-translational modification Omega-N-methylarginine. A compositionally biased stretch (low complexity) spans 523-534; the sequence is NRRNNGYHPYNR.

Interacts with NAM7. Post-translationally, methylated by HMT1. The methylation is required for nuclear export.

It localises to the cytoplasm. The protein resides in the nucleus. It is found in the stress granule. In terms of biological role, RNA-binding protein, which is involved in the polyadenylation-dependent pre-mRNA 3'-end formation and cooperates with the cleavage factor CFIA complex and the cleavage and polyadenylation factor (CPF) complex. May be involved in regulation of poly(A) site selection. Is involved in nonsense-mediated mRNA decay. Seems to bind to an RNA downstream sequence element (DSE) located 3' of a nonsense codon and may mark the transcript for decay. The polypeptide is Nuclear polyadenylated RNA-binding protein 4 (Saccharomyces cerevisiae (strain ATCC 204508 / S288c) (Baker's yeast)).